The following is a 462-amino-acid chain: MDKDSQGLLDSSLMASGTASRSEDEESLAGQKRASSQALGTIPKRRSSSRFIKRKKFDDELVESSLAKSSTRVKGAGGVESGRCSGSEPSSSEKKKVSKAPSTPVPPSPAPTPGLTKRVKKSKQPLQVTKDLGRWKPADDLLLINAVLQTNDLTSVHLGVKFSCRFTLREVQERWYALLYDPVISKLACQAMRQLHPEAIAAIQSKALFSKAEEQLLSKVGSSSQPTLETFQDLLHTHPDAFYLARTAKALQAHWQLMKQYYLLEDQTVQPLPKGDQVLNFSDAEDLIDDSKLKDMRDEVLEHELTVADRRQKREIRQLEQELHKWQVLVDSITGMGSPDFDNQTLAVLRGRMVRYLMRSREITLGRATKDNQIDVDLSLEGPAWKISRKQGVIKLKNNGDFFIANEGRRPIYIDGRPVLCGSKWRLSNNSVVEIASLRFVFLINQDLIALIRAEAAKITPQ.

An N-acetylmethionine modification is found at Met-1. Residues 1–130 (MDKDSQGLLD…KSKQPLQVTK (130 aa)) form a disordered region. Ser-22 bears the Phosphoserine mark. The segment covering 43–55 (PKRRSSSRFIKRK) has biased composition (basic residues). Over residues 81 to 90 (SGRCSGSEPS) the composition is skewed to low complexity. A Phosphoserine modification is found at Ser-102. Thr-103 carries the phosphothreonine modification. The segment covering 103 to 112 (TPVPPSPAPT) has biased composition (pro residues). A Phosphoserine modification is found at Ser-108. Residues 113-123 (PGLTKRVKKSK) carry the Nuclear localization signal motif. 2 positions are modified to N6-acetyllysine: Lys-123 and Lys-130. Residue Ser-282 is modified to Phosphoserine. Residues 301-335 (LEHELTVADRRQKREIRQLEQELHKWQVLVDSITG) adopt a coiled-coil conformation. An FHA domain is found at 363 to 419 (ITLGRATKDNQIDVDLSLEGPAWKISRKQGVIKLKNNGDFFIANEGRRPIYIDGRPV). The short motif at 389 to 396 (RKQGVIKL) is the UBR5-degron element.

In terms of assembly, component of the chromatin remodeling INO80 complex; specifically part of a complex module associated with the N-terminus of INO80. Component of some MLL1/MLL complex, at least composed of the core components KMT2A/MLL1, ASH2L, HCFC1, WDR5 and RBBP5, as well as the facultative components BACC1, CHD8, E2F6, HSP70, INO80C, KANSL1, LAS1L, MAX, MCRS1, MGA, KAT8/MOF, PELP1, PHF20, PRP31, RING2, RUVB1/TIP49A, RUVB2/TIP49B, SENP3, TAF1, TAF4, TAF6, TAF7, TAF9 and TEX10. Component of the NSL complex at least composed of MOF/KAT8, KANSL1, KANSL2, KANSL3, MCRS1, PHF20, OGT1/OGT, WDR5 and HCFC1. Interacts with NOP2. Interacts with PINX1. Interacts with TERT. Interacts with CCDC85B. Interacts with DAXX. Interacts (via N-terminus) with FMR1 (via phosphorylated form). Interacts with FXR1 and FXR2. Interacts (via C-terminus) with NDE1 (via C-terminus); phosphorylation of NDE1 inhibits the interaction. Interacts (via C-terminus) with ZNF375. Interacts (via C-terminus) with active GTP-bound RHEB (via N-terminus) under conditions of high amino acid concentration; the interaction promotes mTORC1 complex activation by RHEB. Interacts (via N-terminus) with the mTORC1 complex; the interaction ensures mTORC1 activation by RHEB. Interacts with DYNC1I1; the interaction is required for the proper distribution of centriolar satellites. Interacts with TTBK2; the interaction is required for recruitment of TTBK2 to the mother centriole. Interacts with KIF2A; the interaction occurs during mitosis and facilitates chromosome alignment. Ubiquitinated by UBR5 when not assembled in the INO80 complex, leading to its degradation: UBR5 recognizes and binds a degron that is not accessible when MCRS1 is part of the INO80 complex. Post-translationally, phosphorylated by AURKA on Ser-35 and/or Ser-36 during mitosis which is required for kinetochore fiber assembly and mitotic progression but not for spindle localization or for chromosome-induced microtuble aster formation. Also phosphorylated by AURKA on Ser-85 and/or Ser-87. Phosphorylated by TTK/MPS1 which enhances recruitment of KIF2A to the minus end of spindle microtubules and facilitates precise chromosome segregation.

It localises to the nucleus. The protein localises to the nucleolus. The protein resides in the cytoplasm. It is found in the cytoskeleton. Its subcellular location is the microtubule organizing center. It localises to the centrosome. The protein localises to the spindle pole. The protein resides in the chromosome. It is found in the centromere. Its subcellular location is the kinetochore. It localises to the lysosome. The protein localises to the centriolar satellite. In terms of biological role, modulates the transcription repressor activity of DAXX by recruiting it to the nucleolus. As part of the NSL complex it may be involved in acetylation of nucleosomal histone H4 on several lysine residues. Putative regulatory component of the chromatin remodeling INO80 complex which is involved in transcriptional regulation, DNA replication and probably DNA repair. May also be an inhibitor of TERT telomerase activity. Binds to G-quadruplex structures in mRNA. Binds to RNA homomer poly(G) and poly(U). Maintains RHEB at the lysosome in its active GTP-bound form and prevents its interaction with the mTORC1 complex inhibitor TSC2, ensuring activation of the mTORC1 complex by RHEB. Stabilizes the minus ends of kinetochore fibers by protecting them from depolymerization, ensuring functional spindle assembly during mitosis. Following phosphorylation by TTK/MPS1, enhances recruitment of KIF2A to the minus ends of mitotic spindle microtubules which promotes chromosome alignment. Regulates the morphology of microtubule minus ends in mitotic spindle by maintaining them in a closed conformation characterized by the presence of an electron-dense cap. Regulates G2/M transition and spindle assembly during oocyte meiosis. Mediates histone modifications and transcriptional regulation in germinal vesicle oocytes which are required for meiotic progression. Also regulates microtubule nucleation and spindle assembly by activating aurora kinases during oocyte meiosis. Contributes to the establishment of centriolar satellites and also plays a role in primary cilium formation by recruiting TTBK2 to the mother centriole which is necessary for removal of the CP110 cap from the mother centriole, an early step in ciliogenesis. Required for epiblast development during early embryogenesis. Essential for cell viability. The polypeptide is Microspherule protein 1 (Mcrs1) (Mus musculus (Mouse)).